The sequence spans 883 residues: DNA mismatch repair protein MutS (883 aa).

An ATP-binding site is contributed by 619–626 (GPNMGGKS).

This sequence belongs to the DNA mismatch repair MutS family.

Functionally, this protein is involved in the repair of mismatches in DNA. It is possible that it carries out the mismatch recognition step. This protein has a weak ATPase activity. The protein is DNA mismatch repair protein MutS of Marinomonas sp. (strain MWYL1).